Here is a 391-residue protein sequence, read N- to C-terminus: Galactarate dehydratase (D-threo-forming) (391 aa).

Arg-15 contacts substrate. Mg(2+)-binding residues include Asp-42 and His-45. Tyr-89 is a binding site for substrate. Catalysis depends on Tyr-90, which acts as the Proton donor. Tyr-164 functions as the Proton acceptor in the catalytic mechanism. Mg(2+)-binding residues include Asp-193, Glu-221, and His-246. Thr-296 serves as a coordination point for substrate. Residue Thr-297 participates in Mg(2+) binding. Arg-385 is a binding site for substrate.

This sequence belongs to the mandelate racemase/muconate lactonizing enzyme family. The cofactor is Mg(2+).

The enzyme catalyses galactarate = (2S,3R)-dihydroxy-5-oxohexanedioate + H2O. Functionally, catalyzes the regioselective dehydration of galactarate into 2-keto-D-threo-4,5-dihydroxyadipate ((2S,3R)-dihydroxy-5-oxohexanedioate). Is not active on other acid sugars. In Oceanobacillus iheyensis (strain DSM 14371 / CIP 107618 / JCM 11309 / KCTC 3954 / HTE831), this protein is Galactarate dehydratase (D-threo-forming).